The primary structure comprises 1042 residues: Isoleucine--tRNA ligase (1042 aa).

The short motif at 48–58 is the 'HIGH' region element; it reads PFATGLPHFGH. The short motif at 594-598 is the 'KMSKS' region element; that stretch reads KMSKS. Lys597 contacts ATP.

This sequence belongs to the class-I aminoacyl-tRNA synthetase family. IleS type 2 subfamily. Monomer. It depends on Zn(2+) as a cofactor.

It is found in the cytoplasm. The catalysed reaction is tRNA(Ile) + L-isoleucine + ATP = L-isoleucyl-tRNA(Ile) + AMP + diphosphate. Its function is as follows. Catalyzes the attachment of isoleucine to tRNA(Ile). As IleRS can inadvertently accommodate and process structurally similar amino acids such as valine, to avoid such errors it has two additional distinct tRNA(Ile)-dependent editing activities. One activity is designated as 'pretransfer' editing and involves the hydrolysis of activated Val-AMP. The other activity is designated 'posttransfer' editing and involves deacylation of mischarged Val-tRNA(Ile). This is Isoleucine--tRNA ligase from Borreliella burgdorferi (strain ZS7) (Borrelia burgdorferi).